Consider the following 236-residue polypeptide: Phosphoribosylaminoimidazole-succinocarboxamide synthase (236 aa).

The protein belongs to the SAICAR synthetase family.

The enzyme catalyses 5-amino-1-(5-phospho-D-ribosyl)imidazole-4-carboxylate + L-aspartate + ATP = (2S)-2-[5-amino-1-(5-phospho-beta-D-ribosyl)imidazole-4-carboxamido]succinate + ADP + phosphate + 2 H(+). It functions in the pathway purine metabolism; IMP biosynthesis via de novo pathway; 5-amino-1-(5-phospho-D-ribosyl)imidazole-4-carboxamide from 5-amino-1-(5-phospho-D-ribosyl)imidazole-4-carboxylate: step 1/2. In Rickettsia bellii (strain OSU 85-389), this protein is Phosphoribosylaminoimidazole-succinocarboxamide synthase.